An 861-amino-acid polypeptide reads, in one-letter code: Probable linoleate 9S-lipoxygenase 7 (861 aa).

The PLAT domain occupies 29 to 160; it reads NVLDFTDLAG…NYKSDRIFFA (132 aa). The region spanning 163 to 861 is the Lipoxygenase domain; the sequence is PYLPSETPEL…GKGIPNSVSI (699 aa). The disordered stretch occupies residues 220–246; the sequence is TLGGSAEYPYPRRGRTGRPPTRTDPKS. Fe cation is bound by residues H522, H527, H713, N717, and I861.

It belongs to the lipoxygenase family. As to quaternary structure, monomer. The cofactor is Fe cation. In terms of tissue distribution, expressed in tubers. Detected in sprouts and flowers. but not in leaves or stems.

Its subcellular location is the cytoplasm. It carries out the reaction (9Z,12Z)-octadecadienoate + O2 = (9S)-hydroperoxy-(10E,12Z)-octadecadienoate. It participates in lipid metabolism; oxylipin biosynthesis. Functionally, plant lipoxygenases may be involved in a number of diverse aspects of plant physiology including growth and development, pest resistance, and senescence or responses to wounding. Catalyzes the hydroperoxidation of lipids containing a cis,cis-1,4-pentadiene structure. The protein is Probable linoleate 9S-lipoxygenase 7 (LOX1.7) of Solanum tuberosum (Potato).